Reading from the N-terminus, the 490-residue chain is Tandem C2 domains nuclear protein (490 aa).

Phosphoserine occurs at positions 83, 156, 168, 174, and 211. Residues 189-215 (HDSLSSVPSSSSSRKNSQGSNRSLDTI) are disordered. Low complexity predominate over residues 192–211 (LSSVPSSSSSRKNSQGSNRS). A phosphothreonine mark is found at Thr-214 and Thr-216. The residue at position 218 (Ser-218) is a Phosphoserine. C2 domains are found at residues 223 to 342 (DFGR…SLDI) and 344 to 471 (PPSK…NQWK). Residues 447–449 (RRK) carry the Nuclear localization signal motif.

It is found in the nucleus. In Homo sapiens (Human), this protein is Tandem C2 domains nuclear protein (TC2N).